Reading from the N-terminus, the 270-residue chain is Regulator of G-protein signaling rgs-10 (270 aa).

The region spanning 135–252 (SPETLAASEY…LEDPLYLDLV (118 aa)) is the RGS domain.

Functionally, shown to have a role in viability and embryogenesis. This chain is Regulator of G-protein signaling rgs-10 (rgs-10), found in Caenorhabditis elegans.